The sequence spans 309 residues: MTTFIPIIFSSVVVVLFVIGNFANGFIALVNSIERVKRQKISFADQILTALAVSRVGLLWVLLLNWYSTVFNPAFYSVEVRTTAYNVWAVTGHFSNWLATSLSIFYLLKIANFSNLIFLHLKRRVKSVILVMLLGPLLFLACQLFVINMKEIVRTKEYEGNLTWKIKLRSAVYLSDATVTTLGNLVPFTLTLLCFLLLICSLCKHLKKMQLHGKGSQDPSTKVHIKALQTVIFFLLLCAVYFLSIMISVWSFGSLENKPVFMFCKAIRFSYPSIHPFILIWGNKKLKQTFLSVLRQVRYWVKGEKPSSP.

Over 1–2 (MT) the chain is Extracellular. A helical membrane pass occupies residues 3–23 (TFIPIIFSSVVVVLFVIGNFA). At 24-55 (NGFIALVNSIERVKRQKISFADQILTALAVSR) the chain is on the cytoplasmic side. Residues 56 to 76 (VGLLWVLLLNWYSTVFNPAFY) traverse the membrane as a helical segment. Over 77–100 (SVEVRTTAYNVWAVTGHFSNWLAT) the chain is Extracellular. A helical transmembrane segment spans residues 101-121 (SLSIFYLLKIANFSNLIFLHL). Residues 122–126 (KRRVK) lie on the Cytoplasmic side of the membrane. Residues 127 to 147 (SVILVMLLGPLLFLACQLFVI) traverse the membrane as a helical segment. The Extracellular portion of the chain corresponds to 148–181 (NMKEIVRTKEYEGNLTWKIKLRSAVYLSDATVTT). N161 is a glycosylation site (N-linked (GlcNAc...) asparagine). A helical transmembrane segment spans residues 182–202 (LGNLVPFTLTLLCFLLLICSL). Residues 203 to 229 (CKHLKKMQLHGKGSQDPSTKVHIKALQ) are Cytoplasmic-facing. A helical transmembrane segment spans residues 230–250 (TVIFFLLLCAVYFLSIMISVW). Topologically, residues 251 to 259 (SFGSLENKP) are extracellular. The helical transmembrane segment at 260–280 (VFMFCKAIRFSYPSIHPFILI) threads the bilayer. Topologically, residues 281-309 (WGNKKLKQTFLSVLRQVRYWVKGEKPSSP) are cytoplasmic.

Belongs to the G-protein coupled receptor T2R family. As to expression, expressed in subsets of taste receptor cells of the tongue and exclusively in gustducin-positive cells.

The protein resides in the membrane. Its function is as follows. Receptor that may play a role in the perception of bitterness and is gustducin-linked. May play a role in sensing the chemical composition of the gastrointestinal content. The activity of this receptor may stimulate alpha gustducin, mediate PLC-beta-2 activation and lead to the gating of TRPM5. Activated by the sulfonyl amide sweeteners saccharin and acesulfame K. The polypeptide is Taste receptor type 2 member 31 (TAS2R31) (Homo sapiens (Human)).